A 148-amino-acid polypeptide reads, in one-letter code: Small ribosomal subunit protein uS13 (148 aa).

The disordered stretch occupies residues 128–148 (RGQRTKSTGRRGSTIGVRKKK).

It belongs to the universal ribosomal protein uS13 family. In terms of assembly, part of the 30S ribosomal subunit. Forms a loose heterodimer with protein S19. Forms two bridges to the 50S subunit in the 70S ribosome.

Its function is as follows. Located at the top of the head of the 30S subunit, it contacts several helices of the 16S rRNA. In the 70S ribosome it contacts the 23S rRNA (bridge B1a) and protein L5 of the 50S subunit (bridge B1b), connecting the 2 subunits; these bridges are implicated in subunit movement. The chain is Small ribosomal subunit protein uS13 from Methanococcoides burtonii (strain DSM 6242 / NBRC 107633 / OCM 468 / ACE-M).